A 274-amino-acid chain; its full sequence is Copper chaperone for superoxide dismutase (274 aa).

The HMA domain maps to 11 to 74 (MCALEFTVQM…LLESTGRQAV (64 aa)). The Cu cation site is built by cysteine 22 and cysteine 25. A Glycyl lysine isopeptide (Lys-Gly) (interchain with G-Cter in ubiquitin) cross-link involves residue lysine 76. The tract at residues 88-234 (AAVAIMEGSG…LACGIIARSA (147 aa)) is superoxide dismutase-like. The cysteines at positions 141 and 227 are disulfide-linked. Histidine 147, histidine 155, histidine 164, and aspartate 167 together coordinate Zn(2+). Glycyl lysine isopeptide (Lys-Gly) (interchain with G-Cter in ubiquitin) cross-links involve residues lysine 189, lysine 216, and lysine 241. Cu cation-binding residues include cysteine 244 and cysteine 246. Serine 267 is subject to Phosphoserine.

This sequence in the C-terminal section; belongs to the Cu-Zn superoxide dismutase family. Homodimer, and heterodimer with SOD1. Interacts with COMMD1. Interacts with XIAP/BIRC4. Interacts with SLC31A1(via C-terminal domain); this interaction is Cu(1+)-mediated. The heterodimer CCS:SOD1 interacts with SLC31A1; this heterotrimer is Cu(1+)-mediated and its maintenance is regulated through SOD1 activation. Requires Cu(2+) as cofactor. The cofactor is Zn(2+). Ubiquitinion by XIAP/BIRC4 leads to enhancement of its chaperone activity toward its physiologic target, SOD1, rather than proteasomal degradation. XIAP/BIRC4 preferentially ubiquitinates at Lys-241.

The protein resides in the cytoplasm. Its function is as follows. Delivers copper to copper zinc superoxide dismutase (SOD1). In Rattus norvegicus (Rat), this protein is Copper chaperone for superoxide dismutase.